Here is a 437-residue protein sequence, read N- to C-terminus: Tol-Pal system protein TolB (437 aa).

Positions 1–30 (MLPTPSRSHKLSGYAAVLFFLWLVCSPAQA) are cleaved as a signal peptide. A compositionally biased stretch (polar residues) spans 410 to 423 (SDGRTRQQLSTQTG). The segment at 410–437 (SDGRTRQQLSTQTGDIREPAWGPLRRLQ) is disordered.

The protein belongs to the TolB family. The Tol-Pal system is composed of five core proteins: the inner membrane proteins TolA, TolQ and TolR, the periplasmic protein TolB and the outer membrane protein Pal. They form a network linking the inner and outer membranes and the peptidoglycan layer.

Its subcellular location is the periplasm. In terms of biological role, part of the Tol-Pal system, which plays a role in outer membrane invagination during cell division and is important for maintaining outer membrane integrity. The chain is Tol-Pal system protein TolB from Nitrosospira multiformis (strain ATCC 25196 / NCIMB 11849 / C 71).